We begin with the raw amino-acid sequence, 387 residues long: Ferrochelatase (387 aa).

Positions 196 and 277 each coordinate Fe cation.

The protein belongs to the ferrochelatase family.

It localises to the cytoplasm. It catalyses the reaction heme b + 2 H(+) = protoporphyrin IX + Fe(2+). The protein operates within porphyrin-containing compound metabolism; protoheme biosynthesis; protoheme from protoporphyrin-IX: step 1/1. Functionally, catalyzes the ferrous insertion into protoporphyrin IX. This Gloeothece citriformis (strain PCC 7424) (Cyanothece sp. (strain PCC 7424)) protein is Ferrochelatase.